The chain runs to 600 residues: Alanine--tRNA ligase (600 aa).

Zn(2+) is bound by residues His463, His467, Cys565, and His569.

This sequence belongs to the class-II aminoacyl-tRNA synthetase family. Zn(2+) is required as a cofactor.

Its subcellular location is the cytoplasm. The enzyme catalyses tRNA(Ala) + L-alanine + ATP = L-alanyl-tRNA(Ala) + AMP + diphosphate. Functionally, catalyzes the attachment of alanine to tRNA(Ala) in a two-step reaction: alanine is first activated by ATP to form Ala-AMP and then transferred to the acceptor end of tRNA(Ala). Also edits incorrectly charged Ser-tRNA(Ala) and Gly-tRNA(Ala) via its editing domain. This chain is Alanine--tRNA ligase (alaS), found in Treponema denticola (strain ATCC 35405 / DSM 14222 / CIP 103919 / JCM 8153 / KCTC 15104).